The primary structure comprises 423 residues: Site-specific recombinase Flp (423 aa).

One can recognise a Tyr recombinase Flp-type domain in the interval 136–422; sequence GNSHSKKMLK…DYLSSYINRR (287 aa). The active-site O-(3'-phospho-DNA)-tyrosine intermediate is the Tyr343.

Belongs to the 'phage' integrase family. In terms of assembly, homotetramer.

In terms of biological role, part of the plasmid amplification system, which corrects any decrease in copy number caused by a rare missegregation event. Catalyzes the recombination between the large inverted repetitions of the 2-micron plasmid during plasmid replication. This recombination event changes the direction of one of the two replication forks in the bidirectionally replicating molecule, effectively resulting in multiple rounds of replication from a single initiation event. Binds specifically to the FLP recognition target (FRT) site where it induces DNA to bend. Three types of bend exist. Type I is approximately 60 degrees and results from 1 FLP molecule binding to 1 symmetry element. Type II is &gt;144 degrees and results from FLP molecules binding to symmetry elements a and b. Type III is approximately 65 degrees and results from FLP molecules binding to symmetry elements b and c. This is Site-specific recombinase Flp (FLP1) from Saccharomyces cerevisiae (strain ATCC 204508 / S288c) (Baker's yeast).